We begin with the raw amino-acid sequence, 60 residues long: Mastoparan-A (60 aa).

A signal peptide spans 1–27 (MKNTILILFTAFIALLGFFGMSAEALA). 4 AXPX repeats span residues 27 to 30 (ADPI), 31 to 34 (ADPL), 35 to 38 (AGPN), and 41 to 43 (ADP). Residues 28–45 (DPIADPLAGPNAEADPEA) constitute a propeptide that is removed on maturation. Position 59 is an isoleucine amide (Ile-59).

The protein belongs to the MCD family. Mastoparan subfamily. As to expression, expressed by the venom gland.

It is found in the secreted. Its subcellular location is the target cell membrane. In terms of biological role, antimicrobial and mast cell degranulating peptide. Has broad spectrum antibacterial activity against both Gram-positive and Gram-negative bacteria (S.aureus MIC=32-64 ug/ml, S.xylosus MIC=2 ug/ml, S.alactolyticus MIC=12 ug/ml, C.koseri MIC=4 ug/ml, E.coli MIC=8 ug/ml, K.pneumoniae MIC=32 ug/ml, P.aerugiosa MIC=192 ug/ml, S.choleraesuis MIC=32 ug/ml, S.typhimurium MIC=32 ug/ml, V.parahamelytics MIC=16 ug/ml). Affects membrane permeability of E.coli. Shows hemolytic activities on sheep, chicken and human erythrocytes. Its mast cell degranulation activity may be related to the activation of G-protein coupled receptors in mast cells as well as interaction with other proteins located in cell endosomal membranes in the mast cells. This is Mastoparan-A from Vespa analis (Yellow-vented hornet).